The chain runs to 641 residues: Epithelial sodium channel subunit beta (641 aa).

Topologically, residues 1 to 50 (MHVKKYLLKGLHRLQKGPGYTYKELLVWYCDNTNTHGPKRIICEGPKKKA) are cytoplasmic. The helical transmembrane segment at 51-71 (MWFVLTLLFTSLVCWQWGLFI) threads the bilayer. Over 72–533 (KTYLNWEVSV…GGQFGFWMGG (462 aa)) the chain is Extracellular. Intrachain disulfides connect Cys-98/Cys-273, Cys-185/Cys-190, Cys-197/Cys-204, Cys-250/Cys-257, Cys-362/Cys-449, Cys-387/Cys-445, Cys-391/Cys-441, Cys-400/Cys-427, and Cys-402/Cys-416. An N-linked (GlcNAc...) asparagine glycan is attached at Asn-141. Residue Asn-379 is glycosylated (N-linked (GlcNAc...) asparagine). The chain crosses the membrane as a helical span at residues 534-554 (SVLCLIEFGEIIIDFVWITII). Residues 555–641 (KLVALAKSVR…IESDSEGDAI (87 aa)) lie on the Cytoplasmic side of the membrane. Positions 597–624 (TPGPDVEAYPHEQNPPIPGTPPPNYDSL) are disordered. Residues 609–620 (QNPPIPGTPPPN) are compositionally biased toward pro residues. The PY motif; recruits WW domain-containing proteins and is thereby required for ubiquitination and inhibition of the channel by NEDD4 and NEDD4L motif lies at 617 to 621 (PPPNY). Phosphoserine is present on residues Ser-634 and Ser-636.

This sequence belongs to the amiloride-sensitive sodium channel (TC 1.A.6) family. SCNN1B subfamily. In terms of assembly, component of the heterotrimeric epithelial sodium channel (ENaC) composed of an alpha/SCNN1A, a beta/SCNN1B and a gamma/SCNN1G subunit. An additional delta/SCNN1D subunit can replace the alpha/SCNN1A subunit to form an alternative channel with specific properties. Interacts with WWP1 (via WW domains). Interacts with WWP2 (via WW domains); inhibits the channel. Interacts with the full-length immature form of PCSK9 (pro-PCSK9). Interacts (N-glycosylated) with BPIFA1; the interaction is direct and inhibits the proteolytic processing of SCNN1A and SCNN1G and the activation of ENaC. Ubiquitinated. Can be ubiquitinated at multiple sites and undergo monoubiquitination and polyubiquitination. Ubiquitination by NEDD4 or NEDD4L inhibits the ENaC channel through endocytosis, intracellular retention and degradation of its individual subunits. However, some studies could not confirm the ubiquitination of this subunit of the ENaC. In terms of processing, phosphorylated on serine and threonine residues. Aldosterone and insulin increase the basal level of phosphorylation. Post-translationally, N-glycosylated. N-glycosylation is required for interaction with BPIFA1.

It localises to the apical cell membrane. The protein resides in the cytoplasmic vesicle membrane. It carries out the reaction Na(+)(in) = Na(+)(out). With respect to regulation, originally identified and characterized by its inhibition by the diuretic drug amiloride. Its function is as follows. This is one of the three pore-forming subunits of the heterotrimeric epithelial sodium channel (ENaC), a critical regulator of sodium balance and fluid homeostasis. ENaC operates in epithelial tissues, where it mediates the electrodiffusion of sodium ions from extracellular fluid through the apical membrane of cells, with water following osmotically. It plays a key role in maintaining sodium homeostasis through electrogenic sodium reabsorption in the kidneys. Additionally, ENaC is essential for airway surface liquid homeostasis, which is crucial for proper mucus clearance. This Bos taurus (Bovine) protein is Epithelial sodium channel subunit beta.